Consider the following 209-residue polypeptide: Ion-translocating oxidoreductase complex subunit G (209 aa).

A helical transmembrane segment spans residues 9-29 (GITLAIFAALTTGLTAVVNSL). Threonine 175 bears the FMN phosphoryl threonine mark.

This sequence belongs to the RnfG family. The complex is composed of six subunits: RnfA, RnfB, RnfC, RnfD, RnfE and RnfG. It depends on FMN as a cofactor.

It is found in the cell inner membrane. Part of a membrane-bound complex that couples electron transfer with translocation of ions across the membrane. The polypeptide is Ion-translocating oxidoreductase complex subunit G (Photorhabdus laumondii subsp. laumondii (strain DSM 15139 / CIP 105565 / TT01) (Photorhabdus luminescens subsp. laumondii)).